Consider the following 434-residue polypeptide: APETALA2-like protein 2 (434 aa).

Residues 1–116 are disordered; sequence MLLDLNVESP…KTRRGPRSRS (116 aa). The segment covering 12–23 has biased composition (low complexity); that stretch reads RSGTSSSSVLNS. Gly residues predominate over residues 25–38; the sequence is DAGGGGGGGGGGGL. Residues 72-87 show a composition bias toward pro residues; sequence LPPPPPAAPSPAPAWQ. Residues 104–113 are compositionally biased toward basic residues; it reads VAKKTRRGPR. The short motif at 106–115 is the Nuclear localization signal element; the sequence is KKTRRGPRSR. DNA-binding regions (AP2/ERF) lie at residues 118–174 and 210–267; these read QYRG…INFN and KFRG…TNFE. The EAR motif lies at 291–295; the sequence is LDLRI.

Belongs to the AP2/ERF transcription factor family. AP2 subfamily. As to quaternary structure, may form homodimer. Interacts with TPR2/ASP1. Highly expressed in developing panicles and in young seedlings. Present at low levels at all developmental stages.

Its subcellular location is the nucleus. In terms of biological role, probable transcription factor. Involved in spikelet transition. Together with SNB, controls synergistically inflorescence architecture and floral meristem establishment via the regulation of spatio-temporal expression of B- and E-function floral organ identity genes in the lodicules and of spikelet meristem genes. Prevents lemma and palea elongation as well as grain growth. The sequence is that of APETALA2-like protein 2 from Oryza sativa subsp. japonica (Rice).